Reading from the N-terminus, the 87-residue chain is Small ribosomal subunit protein uS19 (87 aa).

Belongs to the universal ribosomal protein uS19 family.

Protein S19 forms a complex with S13 that binds strongly to the 16S ribosomal RNA. The sequence is that of Small ribosomal subunit protein uS19 (rpsS) from Mycoplasma genitalium (strain ATCC 33530 / DSM 19775 / NCTC 10195 / G37) (Mycoplasmoides genitalium).